The primary structure comprises 70 residues: Large ribosomal subunit protein eL43 (70 aa).

The Zn(2+) site is built by C36, C39, C55, and C58. The C4-type zinc-finger motif lies at 36 to 58 (CPVCKTTGKVVRIASGVWYCKKC).

Belongs to the eukaryotic ribosomal protein eL43 family. Putative zinc-binding subfamily. Part of the 50S ribosomal subunit. Zn(2+) serves as cofactor.

Functionally, binds to the 23S rRNA. The polypeptide is Large ribosomal subunit protein eL43 (Sulfurisphaera tokodaii (strain DSM 16993 / JCM 10545 / NBRC 100140 / 7) (Sulfolobus tokodaii)).